A 237-amino-acid polypeptide reads, in one-letter code: Pyridoxal phosphate homeostasis protein (237 aa).

The residue at position 35 (Lys-35) is an N6-(pyridoxal phosphate)lysine.

Belongs to the pyridoxal phosphate-binding protein YggS/PROSC family.

Functionally, pyridoxal 5'-phosphate (PLP)-binding protein, which is involved in PLP homeostasis. This is Pyridoxal phosphate homeostasis protein from Haemophilus influenzae (strain ATCC 51907 / DSM 11121 / KW20 / Rd).